The following is a 431-amino-acid chain: Gamma-glutamyl phosphate reductase (431 aa).

It belongs to the gamma-glutamyl phosphate reductase family.

The protein resides in the cytoplasm. It catalyses the reaction L-glutamate 5-semialdehyde + phosphate + NADP(+) = L-glutamyl 5-phosphate + NADPH + H(+). It functions in the pathway amino-acid biosynthesis; L-proline biosynthesis; L-glutamate 5-semialdehyde from L-glutamate: step 2/2. Functionally, catalyzes the NADPH-dependent reduction of L-glutamate 5-phosphate into L-glutamate 5-semialdehyde and phosphate. The product spontaneously undergoes cyclization to form 1-pyrroline-5-carboxylate. The sequence is that of Gamma-glutamyl phosphate reductase from Acetivibrio thermocellus (strain ATCC 27405 / DSM 1237 / JCM 9322 / NBRC 103400 / NCIMB 10682 / NRRL B-4536 / VPI 7372) (Clostridium thermocellum).